A 543-amino-acid polypeptide reads, in one-letter code: CTP synthase (543 aa).

The tract at residues 1–265 (MTKFIFVTGG…DRLVTDRFRI (265 aa)) is amidoligase domain. S13 contacts CTP. S13 serves as a coordination point for UTP. Residues 14–19 (SLGKGI) and D71 contribute to the ATP site. Residues D71 and E139 each coordinate Mg(2+). CTP contacts are provided by residues 146 to 148 (DIE), 186 to 191 (KTKPTQ), and K222. Residues 186–191 (KTKPTQ) and K222 contribute to the UTP site. One can recognise a Glutamine amidotransferase type-1 domain in the interval 290–541 (EIAMVGKYVD…VEAASQHKQT (252 aa)). G351 is an L-glutamine binding site. The Nucleophile; for glutamine hydrolysis role is filled by C378. L-glutamine-binding positions include 379-382 (LGMQ), E402, and R469. Catalysis depends on residues H514 and E516.

The protein belongs to the CTP synthase family. As to quaternary structure, homotetramer.

It catalyses the reaction UTP + L-glutamine + ATP + H2O = CTP + L-glutamate + ADP + phosphate + 2 H(+). It carries out the reaction L-glutamine + H2O = L-glutamate + NH4(+). The catalysed reaction is UTP + NH4(+) + ATP = CTP + ADP + phosphate + 2 H(+). It participates in pyrimidine metabolism; CTP biosynthesis via de novo pathway; CTP from UDP: step 2/2. Allosterically activated by GTP, when glutamine is the substrate; GTP has no effect on the reaction when ammonia is the substrate. The allosteric effector GTP functions by stabilizing the protein conformation that binds the tetrahedral intermediate(s) formed during glutamine hydrolysis. Inhibited by the product CTP, via allosteric rather than competitive inhibition. Catalyzes the ATP-dependent amination of UTP to CTP with either L-glutamine or ammonia as the source of nitrogen. Regulates intracellular CTP levels through interactions with the four ribonucleotide triphosphates. The sequence is that of CTP synthase from Hydrogenovibrio crunogenus (strain DSM 25203 / XCL-2) (Thiomicrospira crunogena).